Here is a 57-residue protein sequence, read N- to C-terminus: Protein GnsB (57 aa).

This sequence belongs to the gns family.

In terms of biological role, overexpression increases levels of unsaturated fatty acids and suppresses both the temperature-sensitive fabA6 mutation and cold-sensitive secG null mutation. The polypeptide is Protein GnsB (gnsB) (Escherichia coli (strain K12)).